The sequence spans 526 residues: Zinc finger protein 69 homolog (526 aa).

Residues 1–39 (MPQQLLITLPTEASTWVKLQHPKKAVEGAPLWEDVTKMF) form the SCAN box domain. A KRAB domain is found at 76–147 (LTFKDISIDF…EKEGPGDPSS (72 aa)). C2H2-type zinc fingers lie at residues 271–293 (YECN…MRIH), 299–321 (FRCK…QRIH), 327–349 (FECE…HRTH), 355–377 (YVCD…LRTH), 383–405 (FTCN…IRIH), 411–433 (YACT…QRIH), 439–461 (YKCK…KTVH), 467–489 (YECN…QRHH), and 495–517 (YECN…HEIH).

It belongs to the krueppel C2H2-type zinc-finger protein family. Expressed in visceral and subcutaneous adipose tissue.

It localises to the nucleus. Putative transcription factor that appears to regulate lipid metabolism. The sequence is that of Zinc finger protein 69 homolog (ZFP69) from Homo sapiens (Human).